The sequence spans 199 residues: 7-methyl-GTP pyrophosphatase (199 aa).

D74 functions as the Proton acceptor in the catalytic mechanism.

It belongs to the Maf family. YceF subfamily. It depends on a divalent metal cation as a cofactor.

The protein localises to the cytoplasm. It catalyses the reaction N(7)-methyl-GTP + H2O = N(7)-methyl-GMP + diphosphate + H(+). Functionally, nucleoside triphosphate pyrophosphatase that hydrolyzes 7-methyl-GTP (m(7)GTP). May have a dual role in cell division arrest and in preventing the incorporation of modified nucleotides into cellular nucleic acids. The polypeptide is 7-methyl-GTP pyrophosphatase (Cupriavidus metallidurans (strain ATCC 43123 / DSM 2839 / NBRC 102507 / CH34) (Ralstonia metallidurans)).